A 78-amino-acid chain; its full sequence is Small ribosomal subunit protein bS18B (78 aa).

The protein belongs to the bacterial ribosomal protein bS18 family. In terms of assembly, part of the 30S ribosomal subunit. Forms a tight heterodimer with protein bS6.

In terms of biological role, binds as a heterodimer with protein bS6 to the central domain of the 16S rRNA, where it helps stabilize the platform of the 30S subunit. This Streptomyces griseus subsp. griseus (strain JCM 4626 / CBS 651.72 / NBRC 13350 / KCC S-0626 / ISP 5235) protein is Small ribosomal subunit protein bS18B.